A 374-amino-acid polypeptide reads, in one-letter code: Wnt inhibitory factor 1 (374 aa).

The N-terminal stretch at 1-28 (MSLTGYFAAPLCSIFLFILAHADAGQQE) is a signal peptide. In terms of domain architecture, WIF spans 33-172 (MWIDAHQARV…PQNAIFFKTC (140 aa)). A glycan (N-linked (GlcNAc...) asparagine) is linked at Asn-83. Cystine bridges form between Cys-135-Cys-172, Cys-177-Cys-187, Cys-181-Cys-193, Cys-195-Cys-204, Cys-209-Cys-219, Cys-213-Cys-225, and Cys-227-Cys-236. EGF-like domains lie at 173–205 (QQAKCTGGCRNGGFCNDRHVCECPDGFYGPHCE), 208–237 (LCMPRCMNGGLCVTPGLCICPPGYYGINCD), 237–269 (DKVNCTTHCLNGGTCFYPGKCICPSGYEGEQCE), 270–301 (TSKCQQPCRNGGKCSGKNKCKCSKGYQGDLCS), and 302–333 (KPVCEPSCGAHGTCIEPNKCQCKEGWNGRYCN). N-linked (GlcNAc...) asparagine glycosylation occurs at Asn-240. 9 cysteine pairs are disulfide-bonded: Cys-241/Cys-251, Cys-245/Cys-257, Cys-259/Cys-268, Cys-273/Cys-283, Cys-277/Cys-289, Cys-291/Cys-300, Cys-305/Cys-315, Cys-309/Cys-321, and Cys-323/Cys-332. The disordered stretch occupies residues 343 to 374 (ALRPTGSRNRQHTPSPKRTEDRQALPESNYIW). A compositionally biased stretch (polar residues) spans 348–358 (GSRNRQHTPSP).

During somatogenesis, expressed predominantly in unsegmented paraxial presomitic mesoderm and, to a much lesser extent, in newly segmented somites.

It is found in the secreted. Its function is as follows. Binds to WNT proteins and inhibits their activities. May be involved in mesoderm segmentation. In Xenopus laevis (African clawed frog), this protein is Wnt inhibitory factor 1 (wif1).